Here is an 862-residue protein sequence, read N- to C-terminus: Taxadiene synthase (862 aa).

Residues Asp613, Asp617, Asn757, Thr761, and Glu765 each coordinate Mg(2+). The DDXXD motif motif lies at 613-617 (DDMAD).

It belongs to the terpene synthase family. It depends on Mg(2+) as a cofactor.

The catalysed reaction is (2E,6E,10E)-geranylgeranyl diphosphate = taxa-4(5),11(12)-diene + diphosphate. It functions in the pathway alkaloid biosynthesis; taxol biosynthesis; taxa-4(20),11-dien-5alpha-ol from geranylgeranyl diphosphate: step 1/2. Its function is as follows. Catalyzes the cyclization of the ubiquitous isoprenoid intermediate geranylgeranyl diphosphate to taxa-4,11-diene, the parent olefin with a taxane skeleton. The chain is Taxadiene synthase (TDC1) from Taxus baccata (English yew).